A 416-amino-acid polypeptide reads, in one-letter code: Serine hydroxymethyltransferase (416 aa).

(6S)-5,6,7,8-tetrahydrofolate is bound by residues L120 and 124-126 (GHL). K230 carries the post-translational modification N6-(pyridoxal phosphate)lysine. Residue E246 coordinates (6S)-5,6,7,8-tetrahydrofolate.

It belongs to the SHMT family. As to quaternary structure, homodimer. It depends on pyridoxal 5'-phosphate as a cofactor.

It localises to the cytoplasm. It carries out the reaction (6R)-5,10-methylene-5,6,7,8-tetrahydrofolate + glycine + H2O = (6S)-5,6,7,8-tetrahydrofolate + L-serine. Its pathway is one-carbon metabolism; tetrahydrofolate interconversion. The protein operates within amino-acid biosynthesis; glycine biosynthesis; glycine from L-serine: step 1/1. Functionally, catalyzes the reversible interconversion of serine and glycine with tetrahydrofolate (THF) serving as the one-carbon carrier. This reaction serves as the major source of one-carbon groups required for the biosynthesis of purines, thymidylate, methionine, and other important biomolecules. Also exhibits THF-independent aldolase activity toward beta-hydroxyamino acids, producing glycine and aldehydes, via a retro-aldol mechanism. This chain is Serine hydroxymethyltransferase, found in Onion yellows phytoplasma (strain OY-M).